A 225-amino-acid chain; its full sequence is UPF0758 protein SO_4248 (225 aa).

An MPN domain is found at 102–224; it reads VLTNPDLTRD…IVSFAERGWI (123 aa). Zn(2+) contacts are provided by histidine 173, histidine 175, and aspartate 186. Positions 173 to 186 match the JAMM motif motif; sequence HNHPSGIAEPSQAD.

This sequence belongs to the UPF0758 family.

This Shewanella oneidensis (strain ATCC 700550 / JCM 31522 / CIP 106686 / LMG 19005 / NCIMB 14063 / MR-1) protein is UPF0758 protein SO_4248.